Here is a 645-residue protein sequence, read N- to C-terminus: Meiosis induction protein kinase IME2/SME1 (645 aa).

A disordered region spans residues 1–24 (MVEKRSRQSSSSGSEFSVPPDVDN). Over residues 8 to 17 (QSSSSGSEFS) the composition is skewed to low complexity. One can recognise a Protein kinase domain in the interval 38–386 (YQLIEKLGAG…AQELCEMPFF (349 aa)). ATP is bound by residues 44–52 (LGAGSFGCV) and lysine 67. Aspartate 193 (proton acceptor) is an active-site residue.

Belongs to the protein kinase superfamily. Ser/Thr protein kinase family.

It carries out the reaction L-seryl-[protein] + ATP = O-phospho-L-seryl-[protein] + ADP + H(+). The enzyme catalyses L-threonyl-[protein] + ATP = O-phospho-L-threonyl-[protein] + ADP + H(+). In terms of biological role, protein kinase which is essential for the initiation of meiosis and sporulation. The protein is Meiosis induction protein kinase IME2/SME1 (IME2) of Saccharomyces cerevisiae (strain ATCC 204508 / S288c) (Baker's yeast).